A 516-amino-acid chain; its full sequence is 2-isopropylmalate synthase (516 aa).

Residues 5-267 (VIIFDTTLRD…TTGIKHDEIS (263 aa)) enclose the Pyruvate carboxyltransferase domain. The Mn(2+) site is built by D14, H202, H204, and N238. The tract at residues 392 to 516 (KLNYLSVQSG…IKQKKSVATV (125 aa)) is regulatory domain.

It belongs to the alpha-IPM synthase/homocitrate synthase family. LeuA type 1 subfamily. Homodimer. The cofactor is Mn(2+).

It localises to the cytoplasm. The catalysed reaction is 3-methyl-2-oxobutanoate + acetyl-CoA + H2O = (2S)-2-isopropylmalate + CoA + H(+). It participates in amino-acid biosynthesis; L-leucine biosynthesis; L-leucine from 3-methyl-2-oxobutanoate: step 1/4. Catalyzes the condensation of the acetyl group of acetyl-CoA with 3-methyl-2-oxobutanoate (2-ketoisovalerate) to form 3-carboxy-3-hydroxy-4-methylpentanoate (2-isopropylmalate). The protein is 2-isopropylmalate synthase of Vibrio cholerae serotype O1 (strain ATCC 39315 / El Tor Inaba N16961).